A 299-amino-acid polypeptide reads, in one-letter code: Bifunctional protein FolD (299 aa).

NADP(+) is bound by residues 166–168 (GRS), Ser-191, and Ile-232.

It belongs to the tetrahydrofolate dehydrogenase/cyclohydrolase family. As to quaternary structure, homodimer.

The enzyme catalyses (6R)-5,10-methylene-5,6,7,8-tetrahydrofolate + NADP(+) = (6R)-5,10-methenyltetrahydrofolate + NADPH. It catalyses the reaction (6R)-5,10-methenyltetrahydrofolate + H2O = (6R)-10-formyltetrahydrofolate + H(+). The protein operates within one-carbon metabolism; tetrahydrofolate interconversion. In terms of biological role, catalyzes the oxidation of 5,10-methylenetetrahydrofolate to 5,10-methenyltetrahydrofolate and then the hydrolysis of 5,10-methenyltetrahydrofolate to 10-formyltetrahydrofolate. This chain is Bifunctional protein FolD, found in Dinoroseobacter shibae (strain DSM 16493 / NCIMB 14021 / DFL 12).